A 342-amino-acid chain; its full sequence is Foldase protein PrsA (342 aa).

A signal peptide spans 1 to 20 (MKKKLILAAAGAMAVFSLAA). The N-palmitoyl cysteine moiety is linked to residue C21. The S-diacylglycerol cysteine moiety is linked to residue C21. The PpiC domain maps to 142 to 235 (HPEVEAQIIQ…QTYQTTYYVV (94 aa)). A disordered region spans residues 297–342 (MQTESSSASSEKKESKSSDSKTSDTKTSDSEKATDSSSKTTESSSK). Basic and acidic residues predominate over residues 306 to 330 (SEKKESKSSDSKTSDTKTSDSEKAT). The span at 331–342 (DSSSKTTESSSK) shows a compositional bias: low complexity.

This sequence belongs to the PrsA family.

The protein resides in the cell membrane. The enzyme catalyses [protein]-peptidylproline (omega=180) = [protein]-peptidylproline (omega=0). Its function is as follows. Plays a major role in protein secretion by helping the post-translocational extracellular folding of several secreted proteins. In Enterococcus faecalis (strain ATCC 700802 / V583), this protein is Foldase protein PrsA.